We begin with the raw amino-acid sequence, 87 residues long: HssA/B-like protein 7 (87 aa).

The segment covering 1–22 (MSILSALTSISNPMKSTKSSVA) has biased composition (polar residues). A disordered region spans residues 1-23 (MSILSALTSISNPMKSTKSSVAN).

Belongs to the hssA/B family.

This chain is HssA/B-like protein 7 (hssl7), found in Dictyostelium discoideum (Social amoeba).